Here is a 669-residue protein sequence, read N- to C-terminus: Dymeclin (669 aa).

Gly2 is lipidated: N-myristoyl glycine.

The protein belongs to the dymeclin family. In terms of assembly, interacts with GOLM1 and PPIB. In terms of processing, myristoylated in vitro; myristoylation is not essential for protein targeting to Golgi compartment.

The protein resides in the cytoplasm. It localises to the golgi apparatus. Its subcellular location is the membrane. Necessary for correct organization of Golgi apparatus. Involved in bone development. This is Dymeclin (Dym) from Mus musculus (Mouse).